Reading from the N-terminus, the 510-residue chain is Glutamyl-tRNA(Gln) amidotransferase subunit A (510 aa).

Catalysis depends on charge relay system residues K82 and S157. Catalysis depends on S181, which acts as the Acyl-ester intermediate.

Belongs to the amidase family. GatA subfamily. As to quaternary structure, heterotrimer of A, B and C subunits.

The catalysed reaction is L-glutamyl-tRNA(Gln) + L-glutamine + ATP + H2O = L-glutaminyl-tRNA(Gln) + L-glutamate + ADP + phosphate + H(+). Functionally, allows the formation of correctly charged Gln-tRNA(Gln) through the transamidation of misacylated Glu-tRNA(Gln) in organisms which lack glutaminyl-tRNA synthetase. The reaction takes place in the presence of glutamine and ATP through an activated gamma-phospho-Glu-tRNA(Gln). The sequence is that of Glutamyl-tRNA(Gln) amidotransferase subunit A from Bordetella avium (strain 197N).